The primary structure comprises 255 residues: Ribonuclease HII (255 aa).

One can recognise an RNase H type-2 domain in the interval Leu-73 to Leu-255. A divalent metal cation is bound by residues Asp-79, Glu-80, and Asp-171.

This sequence belongs to the RNase HII family. Mn(2+) serves as cofactor. The cofactor is Mg(2+).

The protein resides in the cytoplasm. It catalyses the reaction Endonucleolytic cleavage to 5'-phosphomonoester.. Functionally, endonuclease that specifically degrades the RNA of RNA-DNA hybrids. This chain is Ribonuclease HII, found in Clostridioides difficile (strain 630) (Peptoclostridium difficile).